The sequence spans 48 residues: MPQLIPFYFMNQLTYGLLLITVLLILFSQFFLPMILRLYVSRLFISKL.

A helical transmembrane segment spans residues 12 to 32 (QLTYGLLLITVLLILFSQFFL).

Belongs to the ATPase protein 8 family. In terms of assembly, F-type ATPases have 2 components, CF(1) - the catalytic core - and CF(0) - the membrane proton channel.

The protein localises to the mitochondrion membrane. Its function is as follows. Mitochondrial membrane ATP synthase (F(1)F(0) ATP synthase or Complex V) produces ATP from ADP in the presence of a proton gradient across the membrane which is generated by electron transport complexes of the respiratory chain. F-type ATPases consist of two structural domains, F(1) - containing the extramembraneous catalytic core and F(0) - containing the membrane proton channel, linked together by a central stalk and a peripheral stalk. During catalysis, ATP synthesis in the catalytic domain of F(1) is coupled via a rotary mechanism of the central stalk subunits to proton translocation. Part of the complex F(0) domain. Minor subunit located with subunit a in the membrane. The polypeptide is ATP synthase protein 8 (ATP8) (Candida glabrata (strain ATCC 2001 / BCRC 20586 / JCM 3761 / NBRC 0622 / NRRL Y-65 / CBS 138) (Yeast)).